Reading from the N-terminus, the 395-residue chain is Elongation factor Tu (395 aa).

The tr-type G domain maps to 10–204 (KPHVNVGTIG…AVDAYIDTPL (195 aa)). Residues 19–26 (GHVDHGKT) form a G1 region. A GTP-binding site is contributed by 19–26 (GHVDHGKT). Position 26 (threonine 26) interacts with Mg(2+). Residues 60-64 (GITIN) are G2. Positions 81-84 (DCPG) are G3. Residues 81-85 (DCPGH) and 136-139 (NKAD) each bind GTP. Positions 136–139 (NKAD) are G4. Positions 174 to 176 (SAL) are G5.

It belongs to the TRAFAC class translation factor GTPase superfamily. Classic translation factor GTPase family. EF-Tu/EF-1A subfamily. Monomer.

The protein resides in the cytoplasm. The enzyme catalyses GTP + H2O = GDP + phosphate + H(+). Its function is as follows. GTP hydrolase that promotes the GTP-dependent binding of aminoacyl-tRNA to the A-site of ribosomes during protein biosynthesis. This Acholeplasma laidlawii (strain PG-8A) protein is Elongation factor Tu.